A 286-amino-acid polypeptide reads, in one-letter code: 2-hydroxy-6-oxononadienedioate/2-hydroxy-6-oxononatrienedioate hydrolase 2 (286 aa).

The active-site Proton acceptor is His266.

It belongs to the AB hydrolase superfamily. MhpC family. In terms of assembly, homodimer.

It catalyses the reaction (2Z,4E)-2-hydroxy-6-oxonona-2,4-dienedioate + H2O = (2Z)-2-hydroxypenta-2,4-dienoate + succinate + H(+). The enzyme catalyses (2Z,4E,7E)-2-hydroxy-6-oxonona-2,4,7-trienedioate + H2O = (2Z)-2-hydroxypenta-2,4-dienoate + fumarate + H(+). It participates in aromatic compound metabolism; 3-phenylpropanoate degradation. Its function is as follows. Catalyzes the cleavage of the C5-C6 bond of 2-hydroxy-6-oxononadienedioate and 2-hydroxy-6-oxononatrienedioate, a dienol ring fission product of the bacterial meta-cleavage pathway for degradation of phenylpropionic acid. The chain is 2-hydroxy-6-oxononadienedioate/2-hydroxy-6-oxononatrienedioate hydrolase 2 from Pseudomonas putida (Arthrobacter siderocapsulatus).